The primary structure comprises 453 residues: Histidine--tRNA ligase (453 aa).

Belongs to the class-II aminoacyl-tRNA synthetase family. In terms of assembly, homodimer.

It is found in the cytoplasm. The catalysed reaction is tRNA(His) + L-histidine + ATP = L-histidyl-tRNA(His) + AMP + diphosphate + H(+). The chain is Histidine--tRNA ligase from Cytophaga hutchinsonii (strain ATCC 33406 / DSM 1761 / CIP 103989 / NBRC 15051 / NCIMB 9469 / D465).